A 150-amino-acid polypeptide reads, in one-letter code: Ankyrin repeat protein C18/B24 (150 aa).

The stretch at 41-73 (ENKTLLYYAVDVNNIQFAKRLLEYGASVTTSRS) is one ANK repeat.

This is Ankyrin repeat protein C18/B24 from Vaccinia virus (strain Copenhagen) (VACV).